We begin with the raw amino-acid sequence, 269 residues long: Carbohydrate metabolism regulator TYE7 (269 aa).

A disordered region spans residues 146–178; it reads QPKIKQEPGTKAATKPKRRAPRKKLTESQKKAH. Positions 159–168 are enriched in basic residues; that stretch reads TKPKRRAPRK. Basic and acidic residues predominate over residues 169-178; that stretch reads KLTESQKKAH. A bHLH domain is found at 173–244; it reads SQKKAHNKIE…EKATEYILHL (72 aa).

In terms of assembly, efficient DNA binding requires dimerization with another bHLH protein.

The protein localises to the nucleus. In terms of biological role, key transcriptional regulator of carbohydrate metabolism. Binds the promoter sequences of the glycolytic genes at the CANNTG motif and activates their expression during growth on either fermentable or non-fermentable carbon sources as well as under hypoxic growth conditions. Complete glycolytic activation by GAL4 and TYE7 is required for full virulence. Involved in biofilm formation and negatively regulates hyphal formation under hypoxia. Also controls the expression of the copper transport protein CTR1. This is Carbohydrate metabolism regulator TYE7 (TYE7) from Candida albicans (strain SC5314 / ATCC MYA-2876) (Yeast).